Reading from the N-terminus, the 377-residue chain is Leucine aminopeptidase A (377 aa).

Residues 1–18 (MRFLPCIATLAATASALA) form the signal peptide. The propeptide occupies 19–79 (IGDHVRSDDQ…SNKKQKLAVT (61 aa)). Asn-87 is a glycosylation site (N-linked (GlcNAc...) asparagine). Zn(2+) contacts are provided by His-176, Asp-195, Glu-234, and Asp-261. Residue Asn-288 is glycosylated (N-linked (GlcNAc...) asparagine). Residues Cys-310 and Cys-314 are joined by a disulfide bond. A Zn(2+)-binding site is contributed by His-343.

The protein belongs to the peptidase M28 family. M28E subfamily. Monomer. Zn(2+) is required as a cofactor.

Its subcellular location is the secreted. Calcium, magnesium and manganese cations reduce peptidase activity to 20.3-51.3 percent. The metal ion chelating reagent EDTA almost completely inhibits activity. The protease inhibitor bacitracin and the aminopeptidase B inhibitor bestatin, as well as DTT and beta-mercaptoethanol act also as lap A inhibitorsD. Functionally, extracellular aminopeptidase that allows assimilation of proteinaceous substrates. This chain is Leucine aminopeptidase A (lapA), found in Aspergillus oryzae (strain ATCC 42149 / RIB 40) (Yellow koji mold).